A 1316-amino-acid polypeptide reads, in one-letter code: DNA-directed RNA polymerase subunit beta' (1316 aa).

The Zn(2+) site is built by C60, C62, C75, and C78. Residues D535, D537, and D539 each contribute to the Mg(2+) site. C891, C968, C975, and C978 together coordinate Zn(2+).

It belongs to the RNA polymerase beta' chain family. The RNAP catalytic core consists of 2 alpha, 1 beta, 1 beta' and 1 omega subunit. When a sigma factor is associated with the core the holoenzyme is formed, which can initiate transcription. Mg(2+) is required as a cofactor. The cofactor is Zn(2+).

The catalysed reaction is RNA(n) + a ribonucleoside 5'-triphosphate = RNA(n+1) + diphosphate. Functionally, DNA-dependent RNA polymerase catalyzes the transcription of DNA into RNA using the four ribonucleoside triphosphates as substrates. The polypeptide is DNA-directed RNA polymerase subunit beta' (Mycobacterium avium (strain 104)).